The chain runs to 333 residues: Glycerol-3-phosphate dehydrogenase [NAD(P)+] (333 aa).

NADPH is bound by residues Ser10, Trp11, His31, Arg32, and Lys105. Residues Lys105, Gly136, and Ser138 each coordinate sn-glycerol 3-phosphate. Position 140 (Ala140) interacts with NADPH. Sn-glycerol 3-phosphate contacts are provided by Lys191, Asp244, Ser254, Arg255, and Asn256. Lys191 (proton acceptor) is an active-site residue. Arg255 serves as a coordination point for NADPH. 2 residues coordinate NADPH: Ile279 and Glu281.

It belongs to the NAD-dependent glycerol-3-phosphate dehydrogenase family.

It is found in the cytoplasm. The enzyme catalyses sn-glycerol 3-phosphate + NAD(+) = dihydroxyacetone phosphate + NADH + H(+). It catalyses the reaction sn-glycerol 3-phosphate + NADP(+) = dihydroxyacetone phosphate + NADPH + H(+). Its pathway is membrane lipid metabolism; glycerophospholipid metabolism. Catalyzes the reduction of the glycolytic intermediate dihydroxyacetone phosphate (DHAP) to sn-glycerol 3-phosphate (G3P), the key precursor for phospholipid synthesis. This is Glycerol-3-phosphate dehydrogenase [NAD(P)+] from Chlorobium chlorochromatii (strain CaD3).